The following is a 323-amino-acid chain: Aspartate carbamoyltransferase catalytic subunit (323 aa).

Arginine 71 and threonine 72 together coordinate carbamoyl phosphate. Position 99 (lysine 99) interacts with L-aspartate. The carbamoyl phosphate site is built by arginine 121, histidine 151, and glutamine 154. Residues arginine 184 and arginine 239 each coordinate L-aspartate. 2 residues coordinate carbamoyl phosphate: glycine 280 and proline 281.

This sequence belongs to the aspartate/ornithine carbamoyltransferase superfamily. ATCase family. As to quaternary structure, heterododecamer (2C3:3R2) of six catalytic PyrB chains organized as two trimers (C3), and six regulatory PyrI chains organized as three dimers (R2).

It catalyses the reaction carbamoyl phosphate + L-aspartate = N-carbamoyl-L-aspartate + phosphate + H(+). It functions in the pathway pyrimidine metabolism; UMP biosynthesis via de novo pathway; (S)-dihydroorotate from bicarbonate: step 2/3. In terms of biological role, catalyzes the condensation of carbamoyl phosphate and aspartate to form carbamoyl aspartate and inorganic phosphate, the committed step in the de novo pyrimidine nucleotide biosynthesis pathway. The chain is Aspartate carbamoyltransferase catalytic subunit from Ralstonia nicotianae (strain ATCC BAA-1114 / GMI1000) (Ralstonia solanacearum).